Here is a 294-residue protein sequence, read N- to C-terminus: 4-hydroxy-tetrahydrodipicolinate synthase (294 aa).

Pyruvate is bound at residue Thr45. Tyr133 (proton donor/acceptor) is an active-site residue. The active-site Schiff-base intermediate with substrate is the Lys161. Ile203 serves as a coordination point for pyruvate.

It belongs to the DapA family. As to quaternary structure, homotetramer; dimer of dimers.

It is found in the cytoplasm. It catalyses the reaction L-aspartate 4-semialdehyde + pyruvate = (2S,4S)-4-hydroxy-2,3,4,5-tetrahydrodipicolinate + H2O + H(+). Its pathway is amino-acid biosynthesis; L-lysine biosynthesis via DAP pathway; (S)-tetrahydrodipicolinate from L-aspartate: step 3/4. Functionally, catalyzes the condensation of (S)-aspartate-beta-semialdehyde [(S)-ASA] and pyruvate to 4-hydroxy-tetrahydrodipicolinate (HTPA). The sequence is that of 4-hydroxy-tetrahydrodipicolinate synthase from Shewanella sp. (strain ANA-3).